Here is a 101-residue protein sequence, read N- to C-terminus: MIPGELLTDDGEHTLNPGRRTLTLVVQNTADRPIQVGSHYHFAETNGALGFDRAAARGMRLNIASGAAVRFEPGQQRTVELVDFSGDRIVYGFRGLIQGKL.

The protein belongs to the urease beta subunit family. As to quaternary structure, heterotrimer of UreA (gamma), UreB (beta) and UreC (alpha) subunits. Three heterotrimers associate to form the active enzyme.

It localises to the cytoplasm. It catalyses the reaction urea + 2 H2O + H(+) = hydrogencarbonate + 2 NH4(+). The protein operates within nitrogen metabolism; urea degradation; CO(2) and NH(3) from urea (urease route): step 1/1. This is Urease subunit beta from Variovorax paradoxus (strain S110).